The chain runs to 297 residues: Pyridoxal 5'-phosphate synthase subunit PdxS (297 aa).

Residue aspartate 27 coordinates D-ribose 5-phosphate. The Schiff-base intermediate with D-ribose 5-phosphate role is filled by lysine 84. Glycine 156 is a binding site for D-ribose 5-phosphate. Arginine 168 provides a ligand contact to D-glyceraldehyde 3-phosphate. D-ribose 5-phosphate-binding positions include glycine 217 and 238-239 (GS).

This sequence belongs to the PdxS/SNZ family. In terms of assembly, in the presence of PdxT, forms a dodecamer of heterodimers.

The catalysed reaction is aldehydo-D-ribose 5-phosphate + D-glyceraldehyde 3-phosphate + L-glutamine = pyridoxal 5'-phosphate + L-glutamate + phosphate + 3 H2O + H(+). Its pathway is cofactor biosynthesis; pyridoxal 5'-phosphate biosynthesis. Catalyzes the formation of pyridoxal 5'-phosphate from ribose 5-phosphate (RBP), glyceraldehyde 3-phosphate (G3P) and ammonia. The ammonia is provided by the PdxT subunit. Can also use ribulose 5-phosphate and dihydroxyacetone phosphate as substrates, resulting from enzyme-catalyzed isomerization of RBP and G3P, respectively. This chain is Pyridoxal 5'-phosphate synthase subunit PdxS, found in Corynebacterium diphtheriae (strain ATCC 700971 / NCTC 13129 / Biotype gravis).